Here is a 506-residue protein sequence, read N- to C-terminus: Putative basic amino acid antiporter YfcC (506 aa).

The next 13 membrane-spanning stretches (helical) occupy residues 19-39 (LVIIFFVAILTSLATWVVPVG), 107-127 (GTAVGIIMFMLVIGGAFGIVM), 148-168 (ILFIPALFILFSLGGAVFGMG), 171-191 (AVAFAIIIAPLMVRLGYDSIT), 208-228 (WMNPFCVVVAQGIAGVPVLSG), 231-251 (LRIVVWVIATLIGLIFTMVYA), 287-307 (WLVLIVLTAVMVWVIWGVIVN), 310-330 (FIPEIASQFFTMGLVIGIIGV), 352-372 (MMIAPALLVGFAKGILLLVGN), 398-418 (AVAAWFMLLFQAVFNFFVTSG), 419-439 (SGQAALTMPLLAPLGDLVGVN), 442-462 (VTVLAFQFGDGFSHIIYPTSA), and 485-505 (LLGLLFIMSSVVVIGAQLMGY).

The protein to H.influenzae HI_0594. To B.subtilis YcgA.

It localises to the cell inner membrane. Metabolomic profiling of different yfcC over-expression and deletion strains suggests that it may affect the glyoxylate shunt. The chain is Putative basic amino acid antiporter YfcC (yfcC) from Escherichia coli (strain K12).